The primary structure comprises 219 residues: Resolvase (219 aa).

The Resolvase/invertase-type recombinase catalytic domain maps to 15 to 159; the sequence is VARIYLRAST…EDRRERQRQG (145 aa). The O-(5'-phospho-DNA)-serine intermediate role is filled by Ser23.

The protein belongs to the site-specific recombinase resolvase family.

Its function is as follows. Involved in plasmid partition. The polypeptide is Resolvase (parA) (Escherichia coli).